We begin with the raw amino-acid sequence, 181 residues long: CASP-like protein 5A1 (181 aa).

At 1-38 (MFASRPVVHPLEVAAPAHPVQQPAPGVLMKDLPGMPGT) the chain is on the cytoplasmic side. The chain crosses the membrane as a helical span at residues 39 to 59 (PGGLGLRVLQLLFAAISLAVM). The Extracellular portion of the chain corresponds to 60–77 (SSTADFASVSAFCYLITT). A helical transmembrane segment spans residues 78-98 (TVLQCVWSLTVAIVDIYALLV). Residues 99–115 (KRCLQNRRAVTLFSIGD) lie on the Cytoplasmic side of the membrane. Residues 116 to 136 (GITWLVSFSGACAAAGIPVLI) traverse the membrane as a helical segment. At 137 to 153 (DADLIMCSENPCASFQT) the chain is on the extracellular side. A helical membrane pass occupies residues 154-174 (AVAMGFMCCFSLLPSFLLNFY). The Cytoplasmic segment spans residues 175-181 (SIASSHG).

This sequence belongs to the Casparian strip membrane proteins (CASP) family. In terms of assembly, homodimer and heterodimers.

It is found in the cell membrane. This is CASP-like protein 5A1 from Zea mays (Maize).